A 252-amino-acid chain; its full sequence is Sugar fermentation stimulation protein homolog (252 aa).

The protein belongs to the SfsA family.

This is Sugar fermentation stimulation protein homolog from Picosynechococcus sp. (strain ATCC 27264 / PCC 7002 / PR-6) (Agmenellum quadruplicatum).